Consider the following 401-residue polypeptide: Ornithine aminotransferase (401 aa).

N6-(pyridoxal phosphate)lysine is present on lysine 258.

Belongs to the class-III pyridoxal-phosphate-dependent aminotransferase family. OAT subfamily. Pyridoxal 5'-phosphate serves as cofactor.

The protein resides in the cytoplasm. The catalysed reaction is a 2-oxocarboxylate + L-ornithine = L-glutamate 5-semialdehyde + an L-alpha-amino acid. It functions in the pathway amino-acid biosynthesis; L-proline biosynthesis; L-glutamate 5-semialdehyde from L-ornithine: step 1/1. Its function is as follows. Catalyzes the interconversion of ornithine to glutamate semialdehyde. This chain is Ornithine aminotransferase, found in Bacillus subtilis (strain 168).